A 122-amino-acid polypeptide reads, in one-letter code: MIQMQSKLDVADNTGARSVMCIKVLGGSKRRYASIGDIIKVTVKDAAPRGRVKKGDVYNAVVVRTAKGVRRPDGSLVKFDNNAAVLLNNKLEPIGTRIFGPVTRELRSERFMKIVSLAPEVL.

This sequence belongs to the universal ribosomal protein uL14 family. In terms of assembly, part of the 50S ribosomal subunit. Forms a cluster with proteins L3 and L19. In the 70S ribosome, L14 and L19 interact and together make contacts with the 16S rRNA in bridges B5 and B8.

In terms of biological role, binds to 23S rRNA. Forms part of two intersubunit bridges in the 70S ribosome. This chain is Large ribosomal subunit protein uL14, found in Azoarcus sp. (strain BH72).